Consider the following 623-residue polypeptide: Interferon-induced GTP-binding protein Mx3 (623 aa).

The region spanning 31 to 304 is the Dynamin-type G domain; that stretch reads DLALPAIAVI…LVHHIEKSLP (274 aa). Residues 41–48 form a G1 motif region; that stretch reads GDQSSGKS. A GTP-binding site is contributed by 41–48; it reads GDQSSGKS. The segment at 66 to 68 is G2 motif; the sequence is VTR. A G3 motif region spans residues 142–145; the sequence is DLPG. Residues 142-146 and 211-214 contribute to the GTP site; these read DLPGI and TKPD. The segment at 211-214 is G4 motif; sequence TKPD. The G5 motif stretch occupies residues 243 to 246; it reads KCRG. A GED domain is found at 537 to 623; that stretch reads LQEMMLHLKS…MKARSYLVEF (87 aa).

Belongs to the TRAFAC class dynamin-like GTPase superfamily. Dynamin/Fzo/YdjA family.

The protein resides in the cytoplasm. In terms of biological role, does not inhibit strain RB-1 of the fish pathogen, infectious hematopoietic necrosis virus (IHNV). The protein is Interferon-induced GTP-binding protein Mx3 of Oncorhynchus mykiss (Rainbow trout).